We begin with the raw amino-acid sequence, 198 residues long: MPVPALCLLWALAMVTRPASAAPMGGPELAQHEELTLLFHGTLQLGQALNGVYRTTEGRLTKARNSLGLYGRTIELLGQEVSRGRDAAQELRASLLETQMEEDILQLQAEATAEVLGEVAQAQKVLRDSVQRLEVQLRSAWLGPAYREFEVLKAHADKQSHILWALTGHVQRQRREMVAQQHRLRQIQERLHTAALPA.

A signal peptide spans methionine 1 to alanine 21.

It belongs to the ANGPTL8 family. In terms of assembly, interacts with ANGPTL3. Post-translationally, proteolytically cleaved at the N-terminus. Predominantly expressed in liver. Also expressed in adipose tissues.

The protein localises to the secreted. Functionally, hormone that acts as a blood lipid regulator by regulating serum triglyceride levels. May be involved in the metabolic transition between fasting and refeeding: required to direct fatty acids to adipose tissue for storage in the fed state. This Homo sapiens (Human) protein is Angiopoietin-like protein 8.